Here is a 191-residue protein sequence, read N- to C-terminus: MKSLKGSRTEKNILTAFAGESQARNRYNYFGGQAKKDGFVQISDIFAETADQEREHAKRLFKFLEGGDLEIVAAFPAGIIADTHANLIASAAGEHHEYTEMYPSFARIAREEGYEEIARVFASIAVAEEFHEKRFLDFARNIKEGRVFLREQATKWRCRNCGYVHEGTGAPELCPACAHPKAHFELLGINW.

One can recognise a Ferritin-like diiron domain in the interval 1 to 146; sequence MKSLKGSRTE…DFARNIKEGR (146 aa). Fe(3+)-binding residues include Glu20, Glu53, Glu94, Glu97, Glu128, His131, Cys158, Cys161, Cys174, and Cys177. In terms of domain architecture, Rubredoxin-like spans 153-191; sequence ATKWRCRNCGYVHEGTGAPELCPACAHPKAHFELLGINW.

Homodimer. Possesses two rubredoxin-like centers and two non-sulfur oxo-bridged di-iron centers per dimer. The cofactor is Fe(3+).

The protein localises to the cytoplasm. May provide oxidative stress protection via catalytic reduction of intracellular hydrogen peroxide. This is Rubrerythrin (rbr) from Nitratidesulfovibrio vulgaris (strain ATCC 29579 / DSM 644 / CCUG 34227 / NCIMB 8303 / VKM B-1760 / Hildenborough) (Desulfovibrio vulgaris).